Here is a 153-residue protein sequence, read N- to C-terminus: Cell division protein SepF (153 aa).

Belongs to the SepF family. As to quaternary structure, homodimer. Interacts with FtsZ.

The protein resides in the cytoplasm. Cell division protein that is part of the divisome complex and is recruited early to the Z-ring. Probably stimulates Z-ring formation, perhaps through the cross-linking of FtsZ protofilaments. Its function overlaps with FtsA. The polypeptide is Cell division protein SepF (Clostridium tetani (strain Massachusetts / E88)).